Here is a 255-residue protein sequence, read N- to C-terminus: Triosephosphate isomerase (255 aa).

Substrate is bound at residue 9 to 11; the sequence is NWK. His-96 functions as the Electrophile in the catalytic mechanism. Glu-168 acts as the Proton acceptor in catalysis. The substrate site is built by Gly-174 and Ser-213.

Belongs to the triosephosphate isomerase family. Homodimer.

The protein resides in the cytoplasm. It carries out the reaction D-glyceraldehyde 3-phosphate = dihydroxyacetone phosphate. The protein operates within carbohydrate biosynthesis; gluconeogenesis. Its pathway is carbohydrate degradation; glycolysis; D-glyceraldehyde 3-phosphate from glycerone phosphate: step 1/1. In terms of biological role, involved in the gluconeogenesis. Catalyzes stereospecifically the conversion of dihydroxyacetone phosphate (DHAP) to D-glyceraldehyde-3-phosphate (G3P). This is Triosephosphate isomerase from Buchnera aphidicola subsp. Acyrthosiphon pisum (strain APS) (Acyrthosiphon pisum symbiotic bacterium).